A 380-amino-acid chain; its full sequence is Shedu protein SduA (380 aa).

Its function is as follows. Only component of antiviral defense system Shedu. Expression of Shedu in B.subtilis (strain BEST7003) confers resistance to phages phi105, phi29, rho14 and to a lesser extent to SPP1. May be an endonuclease. The chain is Shedu protein SduA from Bacillus cereus (strain B4264).